A 393-amino-acid polypeptide reads, in one-letter code: Pre-mRNA-splicing regulator WTAP (393 aa).

Residues 242 to 393 (QIQISGNRTP…SSVNVQGSVL (152 aa)) are disordered. Positions 254–267 (EPKDEGETSGKDCG) are enriched in basic and acidic residues. Composition is skewed to polar residues over residues 272 to 286 (GPSN…THSS) and 321 to 353 (DGSS…SNDT). The span at 354–365 (DSNHDSQEEKPV) shows a compositional bias: basic and acidic residues. Over residues 369 to 393 (GNRTVSSRHLQNGLDSSVNVQGSVL) the composition is skewed to polar residues.

This sequence belongs to the fl(2)d family. In terms of assembly, component of the WMM complex, a N6-methyltransferase complex composed of a catalytic subcomplex, named MAC, and of an associated subcomplex, named MACOM. Component of the MACOM subcomplex.

The protein resides in the nucleus speckle. The protein localises to the nucleus. It is found in the nucleoplasm. In terms of biological role, associated component of the WMM complex, a complex that mediates N6-methyladenosine (m6A) methylation of RNAs, a modification that plays a role in the efficiency of mRNA splicing and RNA processing. The chain is Pre-mRNA-splicing regulator WTAP from Xenopus laevis (African clawed frog).